The chain runs to 400 residues: Protein transport protein HofC homolog (400 aa).

The next 3 helical transmembrane spans lie at Tyr-165–Leu-185, Leu-209–Ile-229, and Leu-370–Phe-390.

This sequence belongs to the GSP F family.

It localises to the cell inner membrane. The protein is Protein transport protein HofC homolog (hofC) of Escherichia coli (strain K12).